Consider the following 898-residue polypeptide: Chitin synthase 1 (898 aa).

The disordered stretch occupies residues 1–154; that stretch reads MDPRYGAQPM…PPQQGGGIQR (154 aa). Positions 9-21 are enriched in pro residues; the sequence is PMPPRRSPSPGHP. Composition is skewed to polar residues over residues 64 to 75 and 136 to 146; these read DHLSLNAAQSVD and DVPSEQYQDPP. The next 5 membrane-spanning stretches (helical) occupy residues 441 to 461, 540 to 560, 570 to 590, 616 to 636, and 651 to 671; these read SAFG…YVAL, RWLN…LDFL, FAFF…WFAI, ILGV…FVLS, and MCWF…FISV. N-linked (GlcNAc...) asparagine glycosylation is present at Asn685. Helical transmembrane passes span 697 to 717, 726 to 746, 825 to 845, and 870 to 890; these read MLII…LIML, FAQY…YAFC, GVVL…LSSA, and IVLW…MWFL.

The protein belongs to the chitin synthase family. Class I subfamily.

The protein resides in the cell membrane. It catalyses the reaction [(1-&gt;4)-N-acetyl-beta-D-glucosaminyl](n) + UDP-N-acetyl-alpha-D-glucosamine = [(1-&gt;4)-N-acetyl-beta-D-glucosaminyl](n+1) + UDP + H(+). Functionally, polymerizes chitin, a structural polymer of the cell wall and septum, by transferring the sugar moiety of UDP-GlcNAc to the non-reducing end of the growing chitin polymer. Shows additive effects in septum formation with CHS2, CHS3A, CHS4, CHS5, CHS6 and CHS7. Regulates mycelial growth and conidiation. Involved in virulence and mediates mycotoxin deoxinivalenol (DON) biosynthesis via the regulation of the expression of TRI4, TRI5 and TRI6. The sequence is that of Chitin synthase 1 from Gibberella zeae (strain ATCC MYA-4620 / CBS 123657 / FGSC 9075 / NRRL 31084 / PH-1) (Wheat head blight fungus).